Consider the following 322-residue polypeptide: Protein OPG049 (322 aa).

Positions 1-20 (MGTNTIRAFIILYLLAVCGC) are cleaved as a signal peptide. N-linked (GlcNAc...) asparagine; by host glycans are attached at residues Asn-36, Asn-41, Asn-72, Asn-79, Asn-108, Asn-144, Asn-219, and Asn-245. A helical transmembrane segment spans residues 287 to 307 (IMIVLITMLSIIIIIIVVIAI).

This sequence belongs to the orthopoxvirus OPG049 family.

The protein localises to the host cell membrane. In terms of biological role, plays a role in the spread of virus to neighboring cells ex vivo. The protein is Protein OPG049 (OPG049) of Homo sapiens (Human).